We begin with the raw amino-acid sequence, 218 residues long: Dual specificity protein phosphatase TpbA (218 aa).

The N-terminal stretch at 1–28 is a signal peptide; it reads MHRSPLAWLRLLLAAVLGAFLLGGPLHA. The region spanning 44–188 is the Tyrosine-protein phosphatase domain; the sequence is DPSINLYRMS…YVRGADVDGL (145 aa). Residue aspartate 105 is the Proton donor/acceptor of the active site. Residue cysteine 132 is the Phosphocysteine intermediate of the active site.

Belongs to the protein-tyrosine phosphatase family. As to quaternary structure, monomer in solution.

Its subcellular location is the periplasm. It catalyses the reaction O-phospho-L-tyrosyl-[protein] + H2O = L-tyrosyl-[protein] + phosphate. It carries out the reaction O-phospho-L-threonyl-[protein] + H2O = L-threonyl-[protein] + phosphate. The enzyme catalyses O-phospho-L-seryl-[protein] + H2O = L-seryl-[protein] + phosphate. The phosphatase activity is completely inhibited by trisodium orthovanadate, a tyrosine phosphatase specific inhibitor. In terms of biological role, phosphatase that regulates diverse phenotypes in P.aeruginosa via regulation of the concentration of cellular c-di-GMP. Acts by dephosphorylating the membrane-anchored diguanylate cyclase TpbB at tyrosine and serine/threonine sites, leading to inactivation of TpbB and reduced c-di-GMP production. The reduced cellular c-di-GMP concentration leads to reduced adhesin expression, reduced extracellular polysaccharide (EPS) production, pellicule production, cell aggregation and biofilm formation, and enhanced swimming and swarming. It affects colony morphology and controls rugose colony formation. TpbA also acts as a positive regulator of extracellular DNA (eDNA, a major component of the biofilm matrix) and cell lysis by reducing c-di-GMP concentrations. In vitro shows phosphatase activity toward p-nitrophenyl phosphate (pNPP), tyrosine phosphopeptides and a threonine phosphopeptide. Does not have phosphodiesterases (PDE) activity, and cannot degrade c-di-GMP. The sequence is that of Dual specificity protein phosphatase TpbA from Pseudomonas aeruginosa (strain UCBPP-PA14).